The primary structure comprises 126 residues: Large-conductance mechanosensitive channel (126 aa).

2 consecutive transmembrane segments (helical) span residues 14-34 (VLDL…VKSL) and 69-89 (GAFL…FLLV).

This sequence belongs to the MscL family. As to quaternary structure, homopentamer.

The protein resides in the cell membrane. Functionally, channel that opens in response to stretch forces in the membrane lipid bilayer. May participate in the regulation of osmotic pressure changes within the cell. The protein is Large-conductance mechanosensitive channel of Leuconostoc citreum (strain KM20).